We begin with the raw amino-acid sequence, 170 residues long: uncharacterized protein (170 aa).

A signal peptide spans 1 to 28; sequence MTGGVMSQKFVVGAGLLVCSVCSLSAMA.

Belongs to the fimbrial protein family.

Its function is as follows. Part of the yfcOPQRSUV fimbrial operon. Could contribute to adhesion to various surfaces in specific environmental niches. Increases adhesion to eukaryotic T24 bladder epithelial cells in the absence of fim genes. This is an uncharacterized protein from Escherichia coli (strain K12).